A 459-amino-acid chain; its full sequence is MCKYGKSNLAAVASSTSSIIGAAAAAVAEAQPSASPSTSSSFLLLEVPFRHLLRLQPPPYFIAGTRRMAAQLDVTTLIAIVGFVFVFCLYLIHIIALSYSKYRLHHKVKEDSSLPGVSIIKPIVGKDNNLYENIESFFTTQYHKYELLFCFNSSDDEAVEVVKCLMKKYPKVDAKLFFGGETVGLNPKINNMMPAYRSALYPLILVSDSGIFMRSDGVLDMATTMMSHEKMALVTQTPYCKDREGFDAAFEQMYFGTSHGRIYLAGNCMDFVCSTGMSSMMKKEALDECGGISNFGGYLAEDYFFGRELANRGYKSAISSHPALQNSSSVSVSSFLDRICRWVKLRIAMLPHILLVEPLQDCFPSGLIMAFSLNHLVGLNIMPILILHTIYWFSMDYSLMNSMQNGKLSFSPLQFMLIWLLRELTAPFVFIKALLQPTIQWRNNVFHLAWGGQILPPKC.

Residues 77–97 (LIAIVGFVFVFCLYLIHIIAL) traverse the membrane as a helical segment. Position 156 (Asp-156) is a short sequence motif, D1. Position 208 (Asp-208) is a short sequence motif, D2. A short sequence motif (D3) is located at residue Asp-302. Asp-302 acts as the Proton acceptor in catalysis. Residues 338-342 (RICRW) carry the (Q/R)XXRW motif. The next 2 membrane-spanning stretches (helical) occupy residues 367 to 387 (LIMAFSLNHLVGLNIMPILIL) and 415 to 435 (FMLIWLLRELTAPFVFIKALL).

Belongs to the glycosyltransferase 2 family. Expressed in pharyngeal intestinal valve, intestinal rectal valve and hypodermis.

Its subcellular location is the membrane. The enzyme catalyses an N-acylsphing-4-enine + UDP-alpha-D-glucose = a beta-D-glucosyl-(1&lt;-&gt;1')-N-acylsphing-4-enine + UDP + H(+). The catalysed reaction is an N-acyl-15-methylhexadecasphing-4-enine + UDP-alpha-D-glucose = an N-acyl-1-beta-D-glucosyl-15-methylhexadecasphing-4-enine + UDP + H(+). The protein operates within lipid metabolism; sphingolipid metabolism. Its function is as follows. Catalyzes the first glycosylation step in glycosphingolipid biosynthesis, the transfer of glucose to ceramide to produce glucosylceramides (GlcCer). GlcCer are known to contribute to the physical properties and physiological functions of membranes and may regulate signal transduction. Seems to be the major active form in the nematode. Only branched-chain sphingoid bases like 15-methylhexadecasphing-4-enine are used for generating complex sphingolipids in Caenorhabditis elegans. Together with cgt-1, plays a role in the trafficking of proteins such as mig-14 to the cell membrane in intestinal cells. The chain is Ceramide glucosyltransferase 3 from Caenorhabditis elegans.